A 172-amino-acid chain; its full sequence is DNA-directed RNA polymerase II subunit RPB7 (172 aa).

It belongs to the eukaryotic RPB7/RPC8 RNA polymerase subunit family. In terms of assembly, component of the RNA polymerase II (Pol II) core complex consisting of 12 subunits: a ten-subunit catalytic core composed of POLR2A/RPB1, POLR2B/RPB2, POLR2C/RPB3, POLR2I/RPB9, POLR2J/RPB11, POLR2E/RPABC1, POLR2F/RPABC2, POLR2H/RPABC3, POLR2K/RPABC4 and POLR2L/RPABC5 and a mobile stalk composed of two subunits POLR2D/RPB4 and POLR2G/RPB7, protruding from the core and functioning primarily in transcription initiation. Part of Pol II(G) complex, in which Pol II core associates with an additional subunit POLR2M; unlike conventional Pol II, Pol II(G) functions as a transcriptional repressor. Part of TBP-based Pol II pre-initiation complex (PIC), in which Pol II core assembles with general transcription factors and other specific initiation factors including GTF2E1, GTF2E2, GTF2F1, GTF2F2, TCEA1, ERCC2, ERCC3, GTF2H2, GTF2H3, GTF2H4, GTF2H5, GTF2A1, GTF2A2, GTF2B and TBP; this large multi-subunit PIC complex mediates DNA unwinding and targets Pol II core to the transcription start site where the first phosphodiester bond forms.

Its subcellular location is the nucleus. Functionally, core component of RNA polymerase II (Pol II), a DNA-dependent RNA polymerase which synthesizes mRNA precursors and many functional non-coding RNAs using the four ribonucleoside triphosphates as substrates. Pol II is the central component of the basal RNA polymerase II transcription machinery. It is composed of mobile elements that move relative to each other. POLR2G/RPB7 is part of a subcomplex with POLR2D/RPB4 that binds to a pocket formed by POLR2A/RPB1, POLR2B/RPB2 and POLR2F/RPABC2 at the base of the clamp element. The POLR2D/RPB4-POLR2G/RPB7 subcomplex seems to lock the clamp via POLR2G/RPB7 in the closed conformation thus preventing double-stranded DNA to enter the active site cleft. The POLR2D/RPB4-POLR2G/RPB7 subcomplex binds single-stranded DNA and RNA. The sequence is that of DNA-directed RNA polymerase II subunit RPB7 (POLR2G) from Bos taurus (Bovine).